Here is a 384-residue protein sequence, read N- to C-terminus: Chorismate synthase (384 aa).

NADP(+) is bound by residues arginine 40 and arginine 46. Residues 127 to 129 (RTS), 247 to 248 (QA), alanine 292, 307 to 311 (KPIPT), and arginine 333 contribute to the FMN site.

Belongs to the chorismate synthase family. In terms of assembly, homotetramer. The cofactor is FMNH2.

It carries out the reaction 5-O-(1-carboxyvinyl)-3-phosphoshikimate = chorismate + phosphate. Its pathway is metabolic intermediate biosynthesis; chorismate biosynthesis; chorismate from D-erythrose 4-phosphate and phosphoenolpyruvate: step 7/7. Functionally, catalyzes the anti-1,4-elimination of the C-3 phosphate and the C-6 proR hydrogen from 5-enolpyruvylshikimate-3-phosphate (EPSP) to yield chorismate, which is the branch point compound that serves as the starting substrate for the three terminal pathways of aromatic amino acid biosynthesis. This reaction introduces a second double bond into the aromatic ring system. This Alkaliphilus oremlandii (strain OhILAs) (Clostridium oremlandii (strain OhILAs)) protein is Chorismate synthase.